The primary structure comprises 144 residues: Large ribosomal subunit protein uL15 (144 aa).

The disordered stretch occupies residues 1 to 57 (MKLNDLSPAPGSRREKHRPGRGIGSGLGKTGGRGHKGQSSRSGGTIAPGFEGGQQPL). A compositionally biased stretch (gly residues) spans 21–31 (RGIGSGLGKTG).

This sequence belongs to the universal ribosomal protein uL15 family. Part of the 50S ribosomal subunit.

Its function is as follows. Binds to the 23S rRNA. The chain is Large ribosomal subunit protein uL15 from Pseudomonas savastanoi pv. phaseolicola (strain 1448A / Race 6) (Pseudomonas syringae pv. phaseolicola (strain 1448A / Race 6)).